Reading from the N-terminus, the 859-residue chain is DNA mismatch repair protein MutS (859 aa).

622–629 (GPNMGGKS) is a binding site for ATP.

This sequence belongs to the DNA mismatch repair MutS family.

In terms of biological role, this protein is involved in the repair of mismatches in DNA. It is possible that it carries out the mismatch recognition step. This protein has a weak ATPase activity. This is DNA mismatch repair protein MutS from Coxiella burnetii (strain RSA 493 / Nine Mile phase I).